The following is a 629-amino-acid chain: Solute carrier family 22 member 14 (629 aa).

The segment at 1-21 (MKEDQNYKTAFGSQNSRDTHR) is disordered. At 1 to 67 (MKEDQNYKTA…IGEFGTFQWR (67 aa)) the chain is on the cytoplasmic side. The segment covering 7–16 (YKTAFGSQNS) has biased composition (polar residues). The chain crosses the membrane as a helical span at residues 68-88 (LVVLTFIPSILSTFFIFSHHF). Topologically, residues 89–183 (LLTAQRPYCN…LVCGNEPNKE (95 aa)) are extracellular. Residues asparagine 98, asparagine 116, asparagine 124, and asparagine 149 are each glycosylated (N-linked (GlcNAc...) asparagine). A helical transmembrane segment spans residues 184–204 (NGLTVFLSGVLTGSLLFGFLS). The Cytoplasmic segment spans residues 205–209 (DKLGR). The helical transmembrane segment at 210–230 (YPIILLSLLGFLIFGFGTAFV) threads the bilayer. The Extracellular portion of the chain corresponds to 231–240 (SSFYQYLFFR). Residues 241-261 (FFVAQASVGYAICSVSLVMEW) traverse the membrane as a helical segment. At 262-269 (LVGEHRAQ) the chain is on the cytoplasmic side. Residues 270 to 290 (AVILQHSFLTIGVILLTGLAY) form a helical membrane-spanning segment. The Extracellular portion of the chain corresponds to 291–295 (KVVHW). The helical transmembrane segment at 296–316 (RLLCLLGGMPMFPLICNIWVL) threads the bilayer. Topologically, residues 317–378 (RESPRWLMVR…DFCTNQHLFK (62 aa)) are cytoplasmic. The helical transmembrane segment at 379–399 (VVLAIGCVWFTVSYISFTLNL) threads the bilayer. Residues 400–409 (KMNDFGLDVY) lie on the Extracellular side of the membrane. The chain crosses the membrane as a helical span at residues 410-430 (FVQMVRSIVAVPARLCCIILL). The Cytoplasmic portion of the chain corresponds to 431-436 (EYFGRK). Residues 437–457 (WALNLTLFLVTSMCLFLLFLP) traverse the membrane as a helical segment. Over 458–463 (QEPKST) the chain is Extracellular. A helical membrane pass occupies residues 464–484 (IILTLMLAEFSMAGTLSIFFI). The Cytoplasmic segment spans residues 485–496 (YTAELLPTVLRS). A helical transmembrane segment spans residues 497–517 (TGLGMVSLAWVAGAISSVAIF). Residues 518-523 (KQTKTQ) are Extracellular-facing. The helical transmembrane segment at 524-544 (LPIFFCCLCCVLALCFSSLVP) threads the bilayer. Residues 545-629 (ETGSQSLRDS…PVQSLKAQPP (85 aa)) are Cytoplasmic-facing.

This sequence belongs to the major facilitator (TC 2.A.1) superfamily. Organic cation transporter (TC 2.A.1.19) family. As to expression, testis-specific (at protein level). Specifically expressed in male germ cells (at protein level).

It is found in the mitochondrion inner membrane. It localises to the cell projection. The protein localises to the cilium. Its subcellular location is the flagellum membrane. The enzyme catalyses riboflavin(in) = riboflavin(out). Functionally, riboflavin transporter localized at the inner mitochondrial membrane of the spermatozoa midpiece, which is required for male fertility. SLC22A14-mediated riboflavin transport is essential for spermatozoa energy generation and motility: riboflavin is the precursor of FMN and FAD, which are coenzymes of many enzymes in the TCA cycle (the citric acid cycle) in mitochondria. Required for sperm motility and normal sperm flagellar structure. This chain is Solute carrier family 22 member 14, found in Mus musculus (Mouse).